We begin with the raw amino-acid sequence, 37 residues long: MIEVFLFGIVLGLIPITLAGLFVTAYLQYRRGDQLDF.

The helical transmembrane segment at 5-25 (FLFGIVLGLIPITLAGLFVTA) threads the bilayer.

It belongs to the PetG family. In terms of assembly, the 4 large subunits of the cytochrome b6-f complex are cytochrome b6, subunit IV (17 kDa polypeptide, PetD), cytochrome f and the Rieske protein, while the 4 small subunits are PetG, PetL, PetM and PetN. The complex functions as a dimer.

Its subcellular location is the plastid. The protein resides in the chloroplast thylakoid membrane. Component of the cytochrome b6-f complex, which mediates electron transfer between photosystem II (PSII) and photosystem I (PSI), cyclic electron flow around PSI, and state transitions. PetG is required for either the stability or assembly of the cytochrome b6-f complex. The chain is Cytochrome b6-f complex subunit 5 from Capsella bursa-pastoris (Shepherd's purse).